The following is a 356-amino-acid chain: tRNA N6-adenosine threonylcarbamoyltransferase (356 aa).

Fe cation contacts are provided by His-115 and His-119. Residues Leu-138–Gly-142, Asp-171, Gly-184, and Asn-283 contribute to the substrate site. Asp-311 is a Fe cation binding site.

This sequence belongs to the KAE1 / TsaD family. Fe(2+) serves as cofactor.

The protein resides in the cytoplasm. It carries out the reaction L-threonylcarbamoyladenylate + adenosine(37) in tRNA = N(6)-L-threonylcarbamoyladenosine(37) in tRNA + AMP + H(+). Its function is as follows. Required for the formation of a threonylcarbamoyl group on adenosine at position 37 (t(6)A37) in tRNAs that read codons beginning with adenine. Is involved in the transfer of the threonylcarbamoyl moiety of threonylcarbamoyl-AMP (TC-AMP) to the N6 group of A37, together with TsaE and TsaB. TsaD likely plays a direct catalytic role in this reaction. This Prochlorococcus marinus (strain NATL1A) protein is tRNA N6-adenosine threonylcarbamoyltransferase.